A 476-amino-acid polypeptide reads, in one-letter code: Siroheme synthase (476 aa).

The precorrin-2 dehydrogenase /sirohydrochlorin ferrochelatase stretch occupies residues 1–207 (MTANALFPLF…QRHAEAEAVL (207 aa)). Residues 25–26 (KV) and 46–47 (PS) contribute to the NAD(+) site. Phosphoserine is present on Ser-132. The uroporphyrinogen-III C-methyltransferase stretch occupies residues 220 to 476 (GSVTLVGAGA…SAPCPPARIL (257 aa)). Asp-252 (proton acceptor) is an active-site residue. Residue Lys-274 is the Proton donor of the active site. Residues 305–307 (GGD), Val-310, 335–336 (TA), Met-387, and Gly-416 each bind S-adenosyl-L-methionine.

In the N-terminal section; belongs to the precorrin-2 dehydrogenase / sirohydrochlorin ferrochelatase family. The protein in the C-terminal section; belongs to the precorrin methyltransferase family.

The catalysed reaction is uroporphyrinogen III + 2 S-adenosyl-L-methionine = precorrin-2 + 2 S-adenosyl-L-homocysteine + H(+). The enzyme catalyses precorrin-2 + NAD(+) = sirohydrochlorin + NADH + 2 H(+). It catalyses the reaction siroheme + 2 H(+) = sirohydrochlorin + Fe(2+). Its pathway is cofactor biosynthesis; adenosylcobalamin biosynthesis; precorrin-2 from uroporphyrinogen III: step 1/1. It participates in cofactor biosynthesis; adenosylcobalamin biosynthesis; sirohydrochlorin from precorrin-2: step 1/1. The protein operates within porphyrin-containing compound metabolism; siroheme biosynthesis; precorrin-2 from uroporphyrinogen III: step 1/1. It functions in the pathway porphyrin-containing compound metabolism; siroheme biosynthesis; siroheme from sirohydrochlorin: step 1/1. Its pathway is porphyrin-containing compound metabolism; siroheme biosynthesis; sirohydrochlorin from precorrin-2: step 1/1. Multifunctional enzyme that catalyzes the SAM-dependent methylations of uroporphyrinogen III at position C-2 and C-7 to form precorrin-2 via precorrin-1. Then it catalyzes the NAD-dependent ring dehydrogenation of precorrin-2 to yield sirohydrochlorin. Finally, it catalyzes the ferrochelation of sirohydrochlorin to yield siroheme. The protein is Siroheme synthase of Xylella fastidiosa (strain M12).